The following is a 147-amino-acid chain: 3-dehydroquinate dehydratase (147 aa).

Residue Y25 is the Proton acceptor of the active site. Substrate contacts are provided by N76, H82, and D89. The active-site Proton donor is H102. Substrate contacts are provided by residues 103-104 and R113; that span reads IS.

Belongs to the type-II 3-dehydroquinase family. In terms of assembly, homododecamer.

The catalysed reaction is 3-dehydroquinate = 3-dehydroshikimate + H2O. The protein operates within metabolic intermediate biosynthesis; chorismate biosynthesis; chorismate from D-erythrose 4-phosphate and phosphoenolpyruvate: step 3/7. Functionally, catalyzes a trans-dehydration via an enolate intermediate. The chain is 3-dehydroquinate dehydratase from Mycobacterium tuberculosis (strain ATCC 25177 / H37Ra).